A 244-amino-acid chain; its full sequence is 5-oxoprolinase subunit A (244 aa).

It belongs to the LamB/PxpA family. Forms a complex composed of PxpA, PxpB and PxpC.

It catalyses the reaction 5-oxo-L-proline + ATP + 2 H2O = L-glutamate + ADP + phosphate + H(+). Functionally, catalyzes the cleavage of 5-oxoproline to form L-glutamate coupled to the hydrolysis of ATP to ADP and inorganic phosphate. This chain is 5-oxoprolinase subunit A, found in Salmonella schwarzengrund (strain CVM19633).